The primary structure comprises 62 residues: Large ribosomal subunit protein bL28 (62 aa).

Belongs to the bacterial ribosomal protein bL28 family.

This Desulforamulus reducens (strain ATCC BAA-1160 / DSM 100696 / MI-1) (Desulfotomaculum reducens) protein is Large ribosomal subunit protein bL28.